The primary structure comprises 185 residues: Ribosome-recycling factor (185 aa).

This sequence belongs to the RRF family.

It is found in the cytoplasm. Functionally, responsible for the release of ribosomes from messenger RNA at the termination of protein biosynthesis. May increase the efficiency of translation by recycling ribosomes from one round of translation to another. This chain is Ribosome-recycling factor, found in Bacillus cytotoxicus (strain DSM 22905 / CIP 110041 / 391-98 / NVH 391-98).